We begin with the raw amino-acid sequence, 483 residues long: Aspartyl/glutamyl-tRNA(Asn/Gln) amidotransferase subunit B (483 aa).

This sequence belongs to the GatB/GatE family. GatB subfamily. In terms of assembly, heterotrimer of A, B and C subunits.

The enzyme catalyses L-glutamyl-tRNA(Gln) + L-glutamine + ATP + H2O = L-glutaminyl-tRNA(Gln) + L-glutamate + ADP + phosphate + H(+). It carries out the reaction L-aspartyl-tRNA(Asn) + L-glutamine + ATP + H2O = L-asparaginyl-tRNA(Asn) + L-glutamate + ADP + phosphate + 2 H(+). Allows the formation of correctly charged Asn-tRNA(Asn) or Gln-tRNA(Gln) through the transamidation of misacylated Asp-tRNA(Asn) or Glu-tRNA(Gln) in organisms which lack either or both of asparaginyl-tRNA or glutaminyl-tRNA synthetases. The reaction takes place in the presence of glutamine and ATP through an activated phospho-Asp-tRNA(Asn) or phospho-Glu-tRNA(Gln). The chain is Aspartyl/glutamyl-tRNA(Asn/Gln) amidotransferase subunit B from Anaplasma phagocytophilum (strain HZ).